The primary structure comprises 323 residues: D-alanine--D-alanine ligase (323 aa).

Residues 102 to 300 (KQIFRAEGIP…FTELVERMLQ (199 aa)) form the ATP-grasp domain. 130–185 (VARLGSPLVVKPSNSGSTVGISLARDEVSLAQGLALASSVSSRVFLERYIPGKEIT) contacts ATP. 3 residues coordinate Mg(2+): aspartate 254, glutamate 267, and asparagine 269.

This sequence belongs to the D-alanine--D-alanine ligase family. Requires Mg(2+) as cofactor. Mn(2+) is required as a cofactor.

The protein resides in the cytoplasm. The enzyme catalyses 2 D-alanine + ATP = D-alanyl-D-alanine + ADP + phosphate + H(+). Its pathway is cell wall biogenesis; peptidoglycan biosynthesis. Cell wall formation. This is D-alanine--D-alanine ligase from Synechococcus sp. (strain JA-3-3Ab) (Cyanobacteria bacterium Yellowstone A-Prime).